We begin with the raw amino-acid sequence, 152 residues long: Nucleoside diphosphate kinase (152 aa).

6 residues coordinate ATP: lysine 11, phenylalanine 59, arginine 87, threonine 93, arginine 104, and asparagine 114. Residue histidine 117 is the Pros-phosphohistidine intermediate of the active site.

It belongs to the NDK family. In terms of assembly, homotetramer. Mg(2+) is required as a cofactor.

The protein resides in the cytoplasm. The enzyme catalyses a 2'-deoxyribonucleoside 5'-diphosphate + ATP = a 2'-deoxyribonucleoside 5'-triphosphate + ADP. The catalysed reaction is a ribonucleoside 5'-diphosphate + ATP = a ribonucleoside 5'-triphosphate + ADP. Functionally, major role in the synthesis of nucleoside triphosphates other than ATP. The ATP gamma phosphate is transferred to the NDP beta phosphate via a ping-pong mechanism, using a phosphorylated active-site intermediate. This chain is Nucleoside diphosphate kinase, found in Prochlorococcus marinus (strain MIT 9303).